The chain runs to 271 residues: Formamidopyrimidine-DNA glycosylase (271 aa).

The Schiff-base intermediate with DNA role is filled by proline 2. The active-site Proton donor is the glutamate 3. The active-site Proton donor; for beta-elimination activity is lysine 58. DNA contacts are provided by histidine 91 and arginine 109. Residues 236–270 (FVYGREGLACRVCATPVRRVVIGQRSTFFCPRCQR) form an FPG-type zinc finger. The active-site Proton donor; for delta-elimination activity is the arginine 260.

This sequence belongs to the FPG family. As to quaternary structure, monomer. Requires Zn(2+) as cofactor.

The enzyme catalyses Hydrolysis of DNA containing ring-opened 7-methylguanine residues, releasing 2,6-diamino-4-hydroxy-5-(N-methyl)formamidopyrimidine.. The catalysed reaction is 2'-deoxyribonucleotide-(2'-deoxyribose 5'-phosphate)-2'-deoxyribonucleotide-DNA = a 3'-end 2'-deoxyribonucleotide-(2,3-dehydro-2,3-deoxyribose 5'-phosphate)-DNA + a 5'-end 5'-phospho-2'-deoxyribonucleoside-DNA + H(+). In terms of biological role, involved in base excision repair of DNA damaged by oxidation or by mutagenic agents. Acts as a DNA glycosylase that recognizes and removes damaged bases. Has a preference for oxidized purines, such as 7,8-dihydro-8-oxoguanine (8-oxoG). Has AP (apurinic/apyrimidinic) lyase activity and introduces nicks in the DNA strand. Cleaves the DNA backbone by beta-delta elimination to generate a single-strand break at the site of the removed base with both 3'- and 5'-phosphates. This chain is Formamidopyrimidine-DNA glycosylase, found in Aromatoleum aromaticum (strain DSM 19018 / LMG 30748 / EbN1) (Azoarcus sp. (strain EbN1)).